The following is a 61-amino-acid chain: Translational regulator CsrA (61 aa).

It belongs to the CsrA/RsmA family. Homodimer; the beta-strands of each monomer intercalate to form a hydrophobic core, while the alpha-helices form wings that extend away from the core.

Its subcellular location is the cytoplasm. Functionally, a key translational regulator that binds mRNA to regulate translation initiation and/or mRNA stability. Mediates global changes in gene expression, shifting from rapid growth to stress survival by linking envelope stress, the stringent response and the catabolite repression systems. Usually binds in the 5'-UTR; binding at or near the Shine-Dalgarno sequence prevents ribosome-binding, repressing translation, binding elsewhere in the 5'-UTR can activate translation and/or stabilize the mRNA. Its function is antagonized by small RNA(s). The polypeptide is Translational regulator CsrA (Glaesserella parasuis serovar 5 (strain SH0165) (Haemophilus parasuis)).